We begin with the raw amino-acid sequence, 225 residues long: Uridylate kinase (225 aa).

9-10 (GS) is an ATP binding site. Residue glycine 44 coordinates UMP. The ATP site is built by glycine 45 and arginine 49. UMP-binding positions include aspartate 66 and 114-120 (THPGHTT). ATP contacts are provided by threonine 140, asparagine 141, tyrosine 146, and aspartate 149.

It belongs to the UMP kinase family. In terms of assembly, homohexamer.

The protein resides in the cytoplasm. The catalysed reaction is UMP + ATP = UDP + ADP. Its pathway is pyrimidine metabolism; CTP biosynthesis via de novo pathway; UDP from UMP (UMPK route): step 1/1. Inhibited by UTP. Catalyzes the reversible phosphorylation of UMP to UDP. In Thermococcus gammatolerans (strain DSM 15229 / JCM 11827 / EJ3), this protein is Uridylate kinase.